The sequence spans 120 residues: Large ribosomal subunit protein bL21 (120 aa).

Belongs to the bacterial ribosomal protein bL21 family. Part of the 50S ribosomal subunit. Contacts protein L20.

In terms of biological role, this protein binds to 23S rRNA in the presence of protein L20. The polypeptide is Large ribosomal subunit protein bL21 (Rhizorhabdus wittichii (strain DSM 6014 / CCUG 31198 / JCM 15750 / NBRC 105917 / EY 4224 / RW1) (Sphingomonas wittichii)).